The primary structure comprises 389 residues: MNLHEYQSKKLFADYGLPVTKGYVCENVEQALSAIEKLSGSQWIAKCQIHAGGRGKAGGVKVVKSAQEVRSFFTKFLGQRLVTVQTNEQGQPIHQIYLEPCAEIQKELYLSAIIDRSSQRIVFMASSEGGMDIEEVAEKTPHLLHRVTIDPLVGAMPYQGRELAFKLGLSGKQIQQFSQIFCQLAKLFVEKDLSLLEINPLVILKNDELFCLDAKVVVDDNALYRHPDLFSMRDLTQEDPREAEAEKWNLNYVALDGNIGCMVNGAGLAMGTMDIIKLHGGRPANFLDVGGGATKERVMEAFKIILTDSAVKAVLVNIFGGIVRCDLIAKGIVSAINEIGVSVPVIVRLEGTNADLGREILAQSNLNLIAVNSLTEAAEQAVNAAKESE.

Residues 9–244 (KKLFADYGLP…LTQEDPREAE (236 aa)) form the ATP-grasp domain. ATP contacts are provided by residues lysine 46, 53–55 (GRG), glutamate 99, alanine 102, and glutamate 107. Residues asparagine 199 and aspartate 213 each contribute to the Mg(2+) site. Substrate contacts are provided by residues asparagine 264 and 321–323 (GIV).

Belongs to the succinate/malate CoA ligase beta subunit family. Heterotetramer of two alpha and two beta subunits. Mg(2+) is required as a cofactor.

The catalysed reaction is succinate + ATP + CoA = succinyl-CoA + ADP + phosphate. It carries out the reaction GTP + succinate + CoA = succinyl-CoA + GDP + phosphate. It functions in the pathway carbohydrate metabolism; tricarboxylic acid cycle; succinate from succinyl-CoA (ligase route): step 1/1. Functionally, succinyl-CoA synthetase functions in the citric acid cycle (TCA), coupling the hydrolysis of succinyl-CoA to the synthesis of either ATP or GTP and thus represents the only step of substrate-level phosphorylation in the TCA. The beta subunit provides nucleotide specificity of the enzyme and binds the substrate succinate, while the binding sites for coenzyme A and phosphate are found in the alpha subunit. This is Succinate--CoA ligase [ADP-forming] subunit beta from Histophilus somni (strain 2336) (Haemophilus somnus).